Reading from the N-terminus, the 972-residue chain is FHF complex subunit HOOK-interacting protein 1B (972 aa).

Disordered regions lie at residues 465-548 and 573-644; these read APSP…GELE and SAPY…SWPE. A Phosphoserine modification is found at S467. The span at 478-501 shows a compositional bias: low complexity; it reads RGPGSPSVDSSSVTTVPRPSTPSR. S510, S523, S529, and S533 each carry phosphoserine. Residues 523–535 show a composition bias toward low complexity; the sequence is SPGLSASPASSPG. Residues S859 and S897 each carry the phosphoserine modification.

Belongs to the FHIP family. In terms of assembly, component of the FTS/Hook/FHIP complex (FHF complex), composed of AKTIP/FTS, FHIP1B, and one or more members of the Hook family of proteins HOOK1, HOOK2, and HOOK3. The FHF complex associates with the homotypic vesicular sorting complex (the HOPS complex).

Functionally, component of the FTS/Hook/FHIP complex (FHF complex). The FHF complex may function to promote vesicle trafficking and/or fusion via the homotypic vesicular protein sorting complex (the HOPS complex). FHF complex promotes the distribution of AP-4 complex to the perinuclear area of the cell. In Homo sapiens (Human), this protein is FHF complex subunit HOOK-interacting protein 1B.